The sequence spans 133 residues: Small ribosomal subunit protein uS8 (133 aa).

Belongs to the universal ribosomal protein uS8 family. Part of the 30S ribosomal subunit. Contacts proteins S5 and S12.

Functionally, one of the primary rRNA binding proteins, it binds directly to 16S rRNA central domain where it helps coordinate assembly of the platform of the 30S subunit. This Mycoplasma mobile (strain ATCC 43663 / 163K / NCTC 11711) (Mesomycoplasma mobile) protein is Small ribosomal subunit protein uS8.